Here is a 568-residue protein sequence, read N- to C-terminus: Oxygen-dependent choline dehydrogenase (568 aa).

Asp-8–Glu-37 is an FAD binding site. The Proton acceptor role is filled by His-477.

It belongs to the GMC oxidoreductase family. Requires FAD as cofactor.

It catalyses the reaction choline + A = betaine aldehyde + AH2. The enzyme catalyses betaine aldehyde + NAD(+) + H2O = glycine betaine + NADH + 2 H(+). Its pathway is amine and polyamine biosynthesis; betaine biosynthesis via choline pathway; betaine aldehyde from choline (cytochrome c reductase route): step 1/1. In terms of biological role, involved in the biosynthesis of the osmoprotectant glycine betaine. Catalyzes the oxidation of choline to betaine aldehyde and betaine aldehyde to glycine betaine at the same rate. The chain is Oxygen-dependent choline dehydrogenase from Pseudomonas savastanoi pv. phaseolicola (strain 1448A / Race 6) (Pseudomonas syringae pv. phaseolicola (strain 1448A / Race 6)).